A 539-amino-acid polypeptide reads, in one-letter code: Carotene epsilon-monooxygenase, chloroplastic (539 aa).

Residues 1 to 36 (MESSLFSPSSSSYSSLFTAKPTRLLSPKPKFTFSIR) constitute a chloroplast transit peptide. Position 487 (C487) interacts with heme.

The protein belongs to the cytochrome P450 family. The cofactor is heme.

The protein resides in the plastid. Its subcellular location is the chloroplast. The catalysed reaction is alpha-carotene + reduced [NADPH--hemoprotein reductase] + O2 = alpha-cryptoxanthin + oxidized [NADPH--hemoprotein reductase] + H2O + H(+). The enzyme catalyses zeinoxanthin + reduced [NADPH--hemoprotein reductase] + O2 = lutein + oxidized [NADPH--hemoprotein reductase] + H2O + H(+). Heme-containing cytochrome P450 involved in the biosynthesis of xanthophylls. Specific for epsilon- and beta-ring hydroxylation of alpha-carotene. Has only a low activity toward the beta-rings of beta-carotene. The preferred substrate in planta is not alpha-carotene but the epsilon-ring of zeinoxanthin. Possesses a major beta-carotene hydroxylase activity in planta when depleted in its preferred substrate alpha-carotene. This Arabidopsis thaliana (Mouse-ear cress) protein is Carotene epsilon-monooxygenase, chloroplastic (CYP97C1).